Here is an 883-residue protein sequence, read N- to C-terminus: MAAERSSITLGGKGSSLSSSSVYNVASGVANVRIDSSAIERFSTRNVPSIKRSSFGIPQGLTNEETRASLAVLLNKLILSTSGPPSSSTARSVLPLKIVEILNLKAESLELGEIDVTEGENIVLEKSCASLIGICSIIDHKSTTLSQIVDSVAALSCEVTKADIASFSLLDSGDGNGDKDVIGVAGDLKVLLNGYKGTGKLEIEEISKIPWIHGKFRYVVKSVHADARRELNSGVKGGKTGSGNTGIGEALGTTLLPLLTAIKNLGVCSFLRAKLCFEKIVDENLKKCLSEKICVENENLKNSYKLAYTAHLEEDYCRFAHKLNECLGIVWRIVGLEAVAAFFALAGGELFVQKSGDADKEESKTDKKKKKNEKKAVVGKGTSLVIQFIKDRLVSNDAASDGDQMHSLMQCGEQILNLFNPEGRSFDSLLDKVKEIVESNENRRLPKLPKGTRDFAKEQMAVREKAFSIIQNVFKRHGATALDTPVFELRETLMGKYGEDSKLVYDIADQGGELCSLRYDLTVPFARYVAMNGITSFKRYQIAKVYRRDNPSKGRYREFYQCDFDIAGLFEPMGPDFEIVKILTELLDELEIGDYEVKLNHRKLLDGMLEICGVPPEKFRTICSSIDKLDKQSFEQVKKEMVEEKGLSSEIADRIGNFVKEKGAPLELLSKLRQEGSEFLDNQSSREALDELSIMFEALKRSKCSERIVFDLSLARGLDYYTGVIFEAVCIGAEVGSIGAGGRYDNLIGMFGTKQVPAVGMSLGIERVFNIMEELNEKQKQVIRPTETQVLVSIMVDNKLAEAAELVSQLWGAKINAEYLVSKRKEKHFNRAKESGIPWMVMVGEKELSGSFVTLKKLEKGSEEKEDQTCTRDRFVEELKKLL.

This sequence belongs to the class-II aminoacyl-tRNA synthetase family.

The protein localises to the cytoplasm. The protein resides in the cytosol. It carries out the reaction tRNA(His) + L-histidine + ATP = L-histidyl-tRNA(His) + AMP + diphosphate + H(+). This Arabidopsis thaliana (Mouse-ear cress) protein is Histidine--tRNA ligase, cytoplasmic.